The sequence spans 782 residues: Host cell factor homolog hcf-1 (782 aa).

Residues Met1–Lys25 form a disordered region. A compositionally biased stretch (basic and acidic residues) spans Arg14–Lys25. Kelch repeat units lie at residues Leu55–Asn103, Ile105–His151, Lys161–Lys222, Arg227–Leu271, and Lys280–His324. Ser423, Ser431, and Ser449 each carry phosphoserine. Over residues Ser423–Lys434 the composition is skewed to polar residues. The segment at Ser423–Trp553 is disordered. 2 stretches are compositionally biased toward polar residues: residues Thr456–Thr469 and Thr496–Cys513. Ser498 is modified (phosphoserine). The segment covering Gly537–Pro552 has biased composition (acidic residues).

As to quaternary structure, interacts with daf-16/FOXO. Interacts with deacetylase sir-2.1. Interacts with the 14-3-3 family proteins ftt-2 and par-5. Phosphorylated at multiple serine residues. Phosphorylation is developmentally regulated, occurring in embryos but not L1 larvae. Phosphorylation may be cell-cycle-regulated.

Its subcellular location is the nucleus. In terms of biological role, transcriptional coregulator. Involved in control of the cell cycle and in modulating mitotic histone phosphorylation. Plays a role in modulating lifespan by regulating the transcriptional activity of daf-16/Forkhead box protein O, in concert with protein deacetylase sir-2.1/SIRT1, and perhaps acting independently of the Insulin/IGF-1-like signaling (IIS) mediated pathway. Negatively modulates responses to environmental stresses, including oxidative stress, heat stress, and exposure to heavy metals; acting via regulation of the transcription factors daf-16 and skn-1. May play a role in pharyngeal development via positive modulation of expression of sup-35. This is Host cell factor homolog hcf-1 from Caenorhabditis elegans.